The following is a 429-amino-acid chain: MKFTESERLQQLSNEYILGGVNSPSRSYKAVGGGAPVVMREGHGAYLYDVDGNKFIDYLQAYGPIITGHAHPHITKAIQDQAAKGVLYGTPTELEIEFSKKLREAIPSLEKIRFVNSGTEAVMTTIRVARAYTKRNKIIKFAGSYHGHSDLVLVAAGSGPSQLGSPDSAGVPESVAKEVITVPFNDIESYKEAMKHWGDEVAAVLVEPIVGNFGMVEPQPGFLEKVNEITHDYGALVIYDEVITAFRFHYGAAQDLLNVYPDLTAFGKIIGGGLPIGGYGGRQDIMEHVAPLGPAYQAGTMAGNPLSMRAGIALLEVLEQNGVYERLDQLGKRLEDGLLELIDKHNITATINRVYGSLTLYFTDEKITHYEQVENSNGEAFAKFFKLMLNQGINLAPSKFEAWFLTTEHTEEDIDETLKAVDYAFSQMK.

An N6-(pyridoxal phosphate)lysine modification is found at K268.

It belongs to the class-III pyridoxal-phosphate-dependent aminotransferase family. HemL subfamily. In terms of assembly, homodimer. It depends on pyridoxal 5'-phosphate as a cofactor.

It is found in the cytoplasm. It catalyses the reaction (S)-4-amino-5-oxopentanoate = 5-aminolevulinate. It participates in porphyrin-containing compound metabolism; protoporphyrin-IX biosynthesis; 5-aminolevulinate from L-glutamyl-tRNA(Glu): step 2/2. The protein is Glutamate-1-semialdehyde 2,1-aminomutase 1 of Staphylococcus haemolyticus (strain JCSC1435).